We begin with the raw amino-acid sequence, 117 residues long: Non-specific lipid-transfer protein 1 (117 aa).

An N-terminal signal peptide occupies residues 1-26 (MAYSAMTKLALVVALCMVVSVPIAQA). 4 disulfides stabilise this stretch: cysteine 29/cysteine 76, cysteine 39/cysteine 53, cysteine 54/cysteine 99, and cysteine 74/cysteine 113.

It belongs to the plant LTP family.

Plant non-specific lipid-transfer proteins transfer phospholipids as well as galactolipids across membranes. May play a role in wax or cutin deposition in the cell walls of expanding epidermal cells and certain secretory tissues. The sequence is that of Non-specific lipid-transfer protein 1 from Prunus dulcis (Almond).